The sequence spans 379 residues: Cytochrome b (379 aa).

Transmembrane regions (helical) follow at residues 33–53, 77–98, 113–133, and 178–198; these read FGSL…FLAM, WLIR…SIHA, WNIG…GYVL, and FFAF…VHLL. Heme b-binding residues include H83 and H97. Residues H182 and H196 each coordinate heme b. H201 contributes to the a ubiquinone binding site. Transmembrane regions (helical) follow at residues 226-246, 288-308, 320-340, and 347-367; these read IKDL…ALFF, LGGV…PLLN, ITQT…WIGG, and FTMI…ILMP.

Belongs to the cytochrome b family. As to quaternary structure, the cytochrome bc1 complex contains 11 subunits: 3 respiratory subunits (MT-CYB, CYC1 and UQCRFS1), 2 core proteins (UQCRC1 and UQCRC2) and 6 low-molecular weight proteins (UQCRH/QCR6, UQCRB/QCR7, UQCRQ/QCR8, UQCR10/QCR9, UQCR11/QCR10 and a cleavage product of UQCRFS1). This cytochrome bc1 complex then forms a dimer. The cofactor is heme b.

The protein resides in the mitochondrion inner membrane. Functionally, component of the ubiquinol-cytochrome c reductase complex (complex III or cytochrome b-c1 complex) that is part of the mitochondrial respiratory chain. The b-c1 complex mediates electron transfer from ubiquinol to cytochrome c. Contributes to the generation of a proton gradient across the mitochondrial membrane that is then used for ATP synthesis. The protein is Cytochrome b (MT-CYB) of Thaptomys nigrita (Blackish grass mouse).